The primary structure comprises 240 residues: Mitochondrial inner membrane protease ATP23 (240 aa).

Residue His140 participates in a divalent metal cation binding. Residue Glu141 is part of the active site. Position 144 (His144) interacts with a divalent metal cation.

It belongs to the peptidase M76 family.

The protein localises to the mitochondrion inner membrane. Its function is as follows. Has a dual role in the assembly of mitochondrial ATPase. Acts as a protease that removes N-terminal residues of mitochondrial ATPase CF(0) subunit 6 at the intermembrane space side. Also involved in the correct assembly of the membrane-embedded ATPase CF(0) particle, probably mediating association of subunit 6 with the subunit 9 ring. This Scheffersomyces stipitis (strain ATCC 58785 / CBS 6054 / NBRC 10063 / NRRL Y-11545) (Yeast) protein is Mitochondrial inner membrane protease ATP23 (ATP23).